We begin with the raw amino-acid sequence, 292 residues long: NAD kinase (292 aa).

Catalysis depends on aspartate 72, which acts as the Proton acceptor. NAD(+)-binding positions include 72–73, 146–147, histidine 157, arginine 174, aspartate 176, and 187–192; these read DG, NE, and TAYSLS.

It belongs to the NAD kinase family. A divalent metal cation is required as a cofactor.

The protein resides in the cytoplasm. It carries out the reaction NAD(+) + ATP = ADP + NADP(+) + H(+). In terms of biological role, involved in the regulation of the intracellular balance of NAD and NADP, and is a key enzyme in the biosynthesis of NADP. Catalyzes specifically the phosphorylation on 2'-hydroxyl of the adenosine moiety of NAD to yield NADP. This chain is NAD kinase, found in Shewanella woodyi (strain ATCC 51908 / MS32).